Reading from the N-terminus, the 316-residue chain is Ester hydrolase C11orf54 homolog (316 aa).

Residues His-267, His-269, and His-279 each coordinate Zn(2+).

As to quaternary structure, monomer. Requires Zn(2+) as cofactor.

The protein localises to the nucleus. Its subcellular location is the cytoplasm. Its function is as follows. Exhibits ester hydrolase activity on the substrate p-nitrophenyl acetate, in vitro. May regulate DNA damage and repair by regulating HIF1A degradation via chaperone-mediated autophagy (CMA). The protein is Ester hydrolase C11orf54 homolog of Xenopus laevis (African clawed frog).